Consider the following 88-residue polypeptide: Beta-insect excitatory toxin LqhIT1b (88 aa).

The N-terminal stretch at 1-18 (MKFFLLFLVVLPIMGVLG) is a signal peptide. Positions 20–83 (KNGYAVDSKG…ISDTTKKYCD (64 aa)) constitute an LCN-type CS-alpha/beta domain. 4 disulfides stabilise this stretch: Cys34–Cys55, Cys40–Cys60, Cys44–Cys62, and Cys56–Cys82.

Belongs to the long (4 C-C) scorpion toxin superfamily. Sodium channel inhibitor family. Beta subfamily. In terms of tissue distribution, expressed by the venom gland.

Its subcellular location is the secreted. In terms of biological role, excitatory insect toxins induce a spastic paralysis. They bind voltage-independently at site-4 of sodium channels (Nav) and shift the voltage of activation toward more negative potentials thereby affecting sodium channel activation and promoting spontaneous and repetitive firing. The sequence is that of Beta-insect excitatory toxin LqhIT1b from Leiurus hebraeus (Hebrew deathstalker scorpion).